We begin with the raw amino-acid sequence, 429 residues long: 3-phosphoshikimate 1-carboxyvinyltransferase (429 aa).

3-phosphoshikimate contacts are provided by K20, S21, and R25. K20 serves as a coordination point for phosphoenolpyruvate. Phosphoenolpyruvate is bound by residues G89 and R118. Residues S164, S165, Q166, S192, D311, and K338 each coordinate 3-phosphoshikimate. Position 166 (Q166) interacts with phosphoenolpyruvate. D311 (proton acceptor) is an active-site residue. Phosphoenolpyruvate contacts are provided by R342 and R384.

The protein belongs to the EPSP synthase family. Monomer.

It is found in the cytoplasm. It carries out the reaction 3-phosphoshikimate + phosphoenolpyruvate = 5-O-(1-carboxyvinyl)-3-phosphoshikimate + phosphate. The protein operates within metabolic intermediate biosynthesis; chorismate biosynthesis. Functionally, catalyzes the transfer of the enolpyruvyl moiety of phosphoenolpyruvate (PEP) to the 5-hydroxyl of shikimate-3-phosphate (S3P) to produce enolpyruvyl shikimate-3-phosphate and inorganic phosphate. The polypeptide is 3-phosphoshikimate 1-carboxyvinyltransferase (Methanococcus vannielii (strain ATCC 35089 / DSM 1224 / JCM 13029 / OCM 148 / SB)).